The following is a 147-amino-acid chain: uncharacterized protein (147 aa).

2 helical membrane-spanning segments follow: residues 4–26 (YLRV…FFWG) and 123–145 (YALC…RAYF).

Its subcellular location is the cell membrane. This is an uncharacterized protein from Treponema pallidum (strain Nichols).